The primary structure comprises 299 residues: Phosphoribosylaminoimidazole-succinocarboxamide synthase (299 aa).

This sequence belongs to the SAICAR synthetase family.

It carries out the reaction 5-amino-1-(5-phospho-D-ribosyl)imidazole-4-carboxylate + L-aspartate + ATP = (2S)-2-[5-amino-1-(5-phospho-beta-D-ribosyl)imidazole-4-carboxamido]succinate + ADP + phosphate + 2 H(+). It functions in the pathway purine metabolism; IMP biosynthesis via de novo pathway; 5-amino-1-(5-phospho-D-ribosyl)imidazole-4-carboxamide from 5-amino-1-(5-phospho-D-ribosyl)imidazole-4-carboxylate: step 1/2. The chain is Phosphoribosylaminoimidazole-succinocarboxamide synthase (ade7) from Schizosaccharomyces pombe (strain 972 / ATCC 24843) (Fission yeast).